The chain runs to 268 residues: 4-diphosphocytidyl-2-C-methyl-D-erythritol kinase (268 aa).

Lys-10 is a catalytic residue. 101-111 is an ATP binding site; that stretch reads PTQAGLGGGST. Asp-143 is a catalytic residue.

This sequence belongs to the GHMP kinase family. IspE subfamily.

The enzyme catalyses 4-CDP-2-C-methyl-D-erythritol + ATP = 4-CDP-2-C-methyl-D-erythritol 2-phosphate + ADP + H(+). The protein operates within isoprenoid biosynthesis; isopentenyl diphosphate biosynthesis via DXP pathway; isopentenyl diphosphate from 1-deoxy-D-xylulose 5-phosphate: step 3/6. Its function is as follows. Catalyzes the phosphorylation of the position 2 hydroxy group of 4-diphosphocytidyl-2C-methyl-D-erythritol. The sequence is that of 4-diphosphocytidyl-2-C-methyl-D-erythritol kinase from Helicobacter pylori (strain ATCC 700392 / 26695) (Campylobacter pylori).